Reading from the N-terminus, the 330-residue chain is Beta-ketoacyl-[acyl-carrier-protein] synthase III (330 aa).

Catalysis depends on residues Cys-115 and His-255. Residues 256 to 260 (QANVR) form an ACP-binding region. Asn-285 is an active-site residue.

It belongs to the thiolase-like superfamily. FabH family. As to quaternary structure, homodimer.

The protein localises to the cytoplasm. The catalysed reaction is malonyl-[ACP] + acetyl-CoA + H(+) = 3-oxobutanoyl-[ACP] + CO2 + CoA. The protein operates within lipid metabolism; fatty acid biosynthesis. Catalyzes the condensation reaction of fatty acid synthesis by the addition to an acyl acceptor of two carbons from malonyl-ACP. Catalyzes the first condensation reaction which initiates fatty acid synthesis and may therefore play a role in governing the total rate of fatty acid production. Possesses both acetoacetyl-ACP synthase and acetyl transacylase activities. Its substrate specificity determines the biosynthesis of branched-chain and/or straight-chain of fatty acids. The polypeptide is Beta-ketoacyl-[acyl-carrier-protein] synthase III (Symbiobacterium thermophilum (strain DSM 24528 / JCM 14929 / IAM 14863 / T)).